Here is a 37-residue protein sequence, read N- to C-terminus: Large ribosomal subunit protein bL36 (37 aa).

This sequence belongs to the bacterial ribosomal protein bL36 family.

The chain is Large ribosomal subunit protein bL36 from Deinococcus geothermalis (strain DSM 11300 / CIP 105573 / AG-3a).